Here is a 60-residue protein sequence, read N- to C-terminus: DNA-directed RNA polymerase subunit Rpo6 (60 aa).

The protein belongs to the archaeal Rpo6/eukaryotic RPB6 RNA polymerase subunit family. As to quaternary structure, part of the RNA polymerase complex.

Its subcellular location is the cytoplasm. The enzyme catalyses RNA(n) + a ribonucleoside 5'-triphosphate = RNA(n+1) + diphosphate. Functionally, DNA-dependent RNA polymerase (RNAP) catalyzes the transcription of DNA into RNA using the four ribonucleoside triphosphates as substrates. This Halobacterium salinarum (strain ATCC 700922 / JCM 11081 / NRC-1) (Halobacterium halobium) protein is DNA-directed RNA polymerase subunit Rpo6.